Reading from the N-terminus, the 81-residue chain is Putative defensin-like protein 56 (81 aa).

The signal sequence occupies residues 1–23 (MNITKAYVIFFLVVILTNSLSNS). Cystine bridges form between Cys-46–Cys-80, Cys-50–Cys-73, Cys-59–Cys-78, and Cys-63–Cys-79.

The protein belongs to the DEFL family.

It localises to the secreted. The sequence is that of Putative defensin-like protein 56 from Arabidopsis thaliana (Mouse-ear cress).